A 171-amino-acid chain; its full sequence is Endoribonuclease ToxN (171 aa).

Belongs to the ToxN/AbiQ toxin family. In terms of assembly, one ToxN monomer binds to a 36-nt-long single repeat of the ToxI RNA; this complex forms a triangular heterohexameric complex with ToxN connected by the ToxI RNA to another toxin molecule. The ToxI repeat forms a pseudoknot which occludes the toxin active site. Interaction of ToxI with ToxN partially inhibits the latter's endoribonuclease activity in vitro. The complex self-assembles in vitro with either full-length or processed single repeats; during the process the precursor is processed.

Toxic component of a type III toxin-antitoxin (TA) system. An endoribonuclease which is active independently of the ribosome, cleaving between the second and third A of AAA(U/G) sequences, although not all occurrences of this tetranucleotide are cleaved. Digests many mRNA species, including its own transcript and its cognate antitoxin RNA ToxI. ToxI has 5.5 nearly identical 36 nucleotide-long repeats (a single repeat neutralizes the toxin in vivo); a single repeat folds into a pseudoknot which binds the toxin. The ToxI precursor RNA is a preferential target in vivo and is progressively degraded to single repeat lengths as ToxN-ToxI complex self-assembly occurs. In vivo expression of ToxI antitoxin inhibits endonuclease activity of ToxN. The toxin alone inhibits growth when expressed in E.coli without causing cell lysis; this bacteriostatic effect is neutralized by cognate RNA antitoxin ToxI. Non-cognate antitoxin RNA from B.thuringiensis does not inhibit this toxin. The RNA antitoxin is less stable than the proteinaceous toxin; synthesis of ToxI in the absence of new ToxN synthesis restores growth and also detectable accumulation of the ToxN protein. Negatively regulates its own operon in complex with ToxI. The toxin-antitoxin system functions in plasmid maintenance (a plasmid addiction system). In terms of biological role, the TA system protects P.atrosepticum strain 1043 against phage phiM1 and phiA2, E.coli against some but not all coliphages and S.marcescens against some bacteriophages, causing an abortive infection (Abi phenotype). Also protects P.atrosepticum strain 1043 against phage phiTE; phage that escape Abi and grow in this bacterium have evolved a pseudo-ToxI RNA by expanding a pre-existing sequence similar to the bona fide ToxI repeats. The chain is Endoribonuclease ToxN from Pectobacterium atrosepticum (Erwinia carotovora subsp. atroseptica).